The sequence spans 161 residues: Large ribosomal subunit protein uL10 (161 aa).

The protein belongs to the universal ribosomal protein uL10 family. Part of the ribosomal stalk of the 50S ribosomal subunit. The N-terminus interacts with L11 and the large rRNA to form the base of the stalk. The C-terminus forms an elongated spine to which L12 dimers bind in a sequential fashion forming a multimeric L10(L12)X complex.

Its function is as follows. Forms part of the ribosomal stalk, playing a central role in the interaction of the ribosome with GTP-bound translation factors. This chain is Large ribosomal subunit protein uL10, found in Malacoplasma penetrans (strain HF-2) (Mycoplasma penetrans).